Reading from the N-terminus, the 706-residue chain is Ribosomal RNA large subunit methyltransferase K/L (706 aa).

Positions 43–154 (LMYQSLLWSR…RDMASVALDL (112 aa)) constitute a THUMP domain.

Belongs to the methyltransferase superfamily. RlmKL family.

The protein localises to the cytoplasm. The catalysed reaction is guanosine(2445) in 23S rRNA + S-adenosyl-L-methionine = N(2)-methylguanosine(2445) in 23S rRNA + S-adenosyl-L-homocysteine + H(+). It carries out the reaction guanosine(2069) in 23S rRNA + S-adenosyl-L-methionine = N(2)-methylguanosine(2069) in 23S rRNA + S-adenosyl-L-homocysteine + H(+). Functionally, specifically methylates the guanine in position 2445 (m2G2445) and the guanine in position 2069 (m7G2069) of 23S rRNA. This chain is Ribosomal RNA large subunit methyltransferase K/L, found in Yersinia enterocolitica serotype O:8 / biotype 1B (strain NCTC 13174 / 8081).